A 390-amino-acid polypeptide reads, in one-letter code: Transaldolase (390 aa).

Lys135 (schiff-base intermediate with substrate) is an active-site residue. EF-hand domains follow at residues 329–364 and 365–388; these read AFCHVVQEIFMLNDLDGDGCITREEWLGSDAVFDAL and DHDHDGRLLQEDVRSGLGAALALT. 10 residues coordinate Ca(2+): Asp342, Asp344, Asp346, Cys348, Glu353, Asp365, Asp367, Asp369, Arg371, and Asp376.

This sequence belongs to the transaldolase family. Type 1 subfamily.

It localises to the cytoplasm. It catalyses the reaction D-sedoheptulose 7-phosphate + D-glyceraldehyde 3-phosphate = D-erythrose 4-phosphate + beta-D-fructose 6-phosphate. Its pathway is carbohydrate degradation; pentose phosphate pathway; D-glyceraldehyde 3-phosphate and beta-D-fructose 6-phosphate from D-ribose 5-phosphate and D-xylulose 5-phosphate (non-oxidative stage): step 2/3. Its function is as follows. Transaldolase is important for the balance of metabolites in the pentose-phosphate pathway. This Prochlorococcus marinus (strain MIT 9313) protein is Transaldolase.